The chain runs to 408 residues: UDP-N-acetylglucosamine--dolichyl-phosphate N-acetylglucosaminephosphotransferase (408 aa).

The Lumenal segment spans residues 1-10 (MWAFPELPMP). A helical membrane pass occupies residues 11–38 (LLVNLIGSLMGFVATVTLIPAFRGHFIA). At 39–58 (ARLCGQDLNKSSREQIPESQ) the chain is on the cytoplasmic side. Residues 44 to 46 (QDL) and Glu-56 contribute to the UDP-N-acetyl-alpha-D-glucosamine site. Residues 59–78 (GVISGAVFLIILFCFIPFPF) traverse the membrane as a helical segment. The Lumenal portion of the chain corresponds to 79–91 (LNCFVEQQCKAFP). Residues 92-118 (HHEFVALIGALLAICCMIFLGFADDVL) form a helical membrane-spanning segment. Topologically, residues 119 to 121 (NLR) are cytoplasmic. A helical membrane pass occupies residues 122–143 (WRHKLLLPTAASLPLLMVYFTN). Residue Lys-125 participates in dolichyl phosphate binding. Residues 144–166 (FGNTTIVVPKPLRPILGLHLDLG) are Lumenal-facing. An N-linked (GlcNAc...) asparagine glycan is attached at Asn-146. A helical transmembrane segment spans residues 167–186 (ILYYVYMGLLAVFCTNAINI). 178–186 (VFCTNAINI) lines the dolichyl phosphate pocket. Asn-185 lines the Mg(2+) pocket. Residues 187 to 192 (LAGING) are Cytoplasmic-facing. Asn-191 is a UDP-N-acetyl-alpha-D-glucosamine binding site. A helical membrane pass occupies residues 193–213 (LEAGQSLVISASIIVFNLVEL). Residues 214-218 (DGDYR) lie on the Lumenal side of the membrane. The helical transmembrane segment at 219-242 (DDHIFSLYFMIPFFFTTLGLLYHN) threads the bilayer. Topologically, residues 243–250 (WYPSRVFV) are cytoplasmic. Residues 251-269 (GDTFCYFAGMTFAVVGILG) traverse the membrane as a helical segment. Asp-252 contributes to the Mg(2+) binding site. The Lumenal segment spans residues 270–271 (HF). The chain crosses the membrane as a helical span at residues 272–293 (SKTMLLFFMPQVFNFLYSLPQL). Over 294–375 (LHIIPCPRHR…LLLKVFGPMH (82 aa)) the chain is Cytoplasmic. 301–303 (RHR) contributes to the UDP-N-acetyl-alpha-D-glucosamine binding site. A helical membrane pass occupies residues 376–400 (ERNLTLLLLLLQVVGSAVTFSIRYQ). The Lumenal segment spans residues 401 to 408 (LVRLFYDV).

This sequence belongs to the glycosyltransferase 4 family. Homodimer. Mg(2+) is required as a cofactor.

The protein localises to the endoplasmic reticulum membrane. It catalyses the reaction a di-trans,poly-cis-dolichyl phosphate + UDP-N-acetyl-alpha-D-glucosamine = an N-acetyl-alpha-D-glucosaminyl-diphospho-di-trans,poly-cis-dolichol + UMP. Its pathway is protein modification; protein glycosylation. Its activity is regulated as follows. Inhibited by natural nucleoside antibiotic tunicamycin, which acts as a structural analog and competitor of UDP-GlcNAc. Activated by Man-P-Dol. Activated by manganese. Inhibited by diumycin. In terms of biological role, UDP-N-acetylglucosamine--dolichyl-phosphate N-acetylglucosaminephosphotransferase that operates in the biosynthetic pathway of dolichol-linked oligosaccharides, the glycan precursors employed in protein asparagine (N)-glycosylation. The assembly of dolichol-linked oligosaccharides begins on the cytosolic side of the endoplasmic reticulum membrane and finishes in its lumen. The sequential addition of sugars to dolichol pyrophosphate produces dolichol-linked oligosaccharides containing fourteen sugars, including two GlcNAcs, nine mannoses and three glucoses. Once assembled, the oligosaccharide is transferred from the lipid to nascent proteins by oligosaccharyltransferases. Catalyzes the initial step of dolichol-linked oligosaccharide biosynthesis, transfering GlcNAc-1-P from cytosolic UDP-GlcNAc onto the carrier lipid dolichyl phosphate (P-dolichol), yielding GlcNAc-P-P-dolichol embedded in the cytoplasmic leaflet of the endoplasmic reticulum membrane. This Bos taurus (Bovine) protein is UDP-N-acetylglucosamine--dolichyl-phosphate N-acetylglucosaminephosphotransferase.